Consider the following 284-residue polypeptide: NH(3)-dependent NAD(+) synthetase (284 aa).

Glycine 41 to serine 48 is an ATP binding site. Aspartate 47 contacts Mg(2+). Arginine 127 is a binding site for deamido-NAD(+). Threonine 147 serves as a coordination point for ATP. Residue glutamate 152 coordinates Mg(2+). Aspartate 167 is a binding site for deamido-NAD(+). Residues lysine 176 and serine 199 each coordinate ATP. Residues phenylalanine 264–glycine 284 are disordered. Residues proline 275–glycine 284 are compositionally biased toward acidic residues.

This sequence belongs to the NAD synthetase family. As to quaternary structure, homodimer.

It carries out the reaction deamido-NAD(+) + NH4(+) + ATP = AMP + diphosphate + NAD(+) + H(+). It participates in cofactor biosynthesis; NAD(+) biosynthesis; NAD(+) from deamido-NAD(+) (ammonia route): step 1/1. Catalyzes the ATP-dependent amidation of deamido-NAD to form NAD. Uses ammonia as a nitrogen source. The chain is NH(3)-dependent NAD(+) synthetase from Methanopyrus kandleri (strain AV19 / DSM 6324 / JCM 9639 / NBRC 100938).